The following is a 139-amino-acid chain: Small ribosomal subunit protein uS12 (139 aa).

The interval 119 to 139 (GVDKRRQQRSAYGAKKPKPKS) is disordered.

It belongs to the universal ribosomal protein uS12 family. As to quaternary structure, part of the 30S ribosomal subunit. Contacts proteins S8 and S17. May interact with IF1 in the 30S initiation complex.

With S4 and S5 plays an important role in translational accuracy. Its function is as follows. Interacts with and stabilizes bases of the 16S rRNA that are involved in tRNA selection in the A site and with the mRNA backbone. Located at the interface of the 30S and 50S subunits, it traverses the body of the 30S subunit contacting proteins on the other side and probably holding the rRNA structure together. The combined cluster of proteins S8, S12 and S17 appears to hold together the shoulder and platform of the 30S subunit. This is Small ribosomal subunit protein uS12 from Mycoplasma genitalium (strain ATCC 33530 / DSM 19775 / NCTC 10195 / G37) (Mycoplasmoides genitalium).